Here is a 96-residue protein sequence, read N- to C-terminus: Co-chaperonin GroES (96 aa).

It belongs to the GroES chaperonin family. Heptamer of 7 subunits arranged in a ring. Interacts with the chaperonin GroEL.

It is found in the cytoplasm. Functionally, together with the chaperonin GroEL, plays an essential role in assisting protein folding. The GroEL-GroES system forms a nano-cage that allows encapsulation of the non-native substrate proteins and provides a physical environment optimized to promote and accelerate protein folding. GroES binds to the apical surface of the GroEL ring, thereby capping the opening of the GroEL channel. The protein is Co-chaperonin GroES of Halorhodospira halophila (strain DSM 244 / SL1) (Ectothiorhodospira halophila (strain DSM 244 / SL1)).